The chain runs to 229 residues: Molybdenum transport system permease protein ModB (229 aa).

The ABC transmembrane type-1 domain maps to 6-214; it reads INLSLSVAVS…LISLLLSEWL (209 aa). 5 helical membrane passes run 12–32, 45–65, 83–103, 132–152, and 196–216; these read VAVS…WLLA, VIHL…LVAM, FGFS…PLVV, FFTI…VLGF, and LCLF…WLSK.

The protein belongs to the binding-protein-dependent transport system permease family. CysTW subfamily.

It localises to the cell inner membrane. Functionally, part of the binding-protein-dependent transport system for molybdenum; probably responsible for the translocation of the substrate across the membrane. The chain is Molybdenum transport system permease protein ModB (modB) from Haemophilus influenzae (strain ATCC 51907 / DSM 11121 / KW20 / Rd).